We begin with the raw amino-acid sequence, 264 residues long: Tritrans,polycis-undecaprenyl-diphosphate synthase (geranylgeranyl-diphosphate specific) (264 aa).

Residue D43 is part of the active site. Mg(2+) is bound at residue D43. Residues 44-47 (GNRR), W48, H60, and 88-90 (STE) each bind substrate. The active-site Proton acceptor is the N91. Residues F92, R94, R213, and 219-221 (RIS) each bind substrate. Residue E232 coordinates Mg(2+).

It belongs to the UPP synthase family. As to quaternary structure, homodimer. Mg(2+) is required as a cofactor.

It catalyses the reaction geranylgeranyl diphosphate + 7 isopentenyl diphosphate = tri-trans,hepta-cis-undecaprenyl diphosphate + 7 diphosphate. Catalyzes the sequential condensation of isopentenyl diphosphate (IPP) with geranylgeranyl diphosphate (GGPP) to yield (2Z,6Z,10Z,14Z,18Z,22Z,26Z,30E,34E,38E)-undecaprenyl diphosphate (tritrans,heptacis-UPP). It is probably the precursor of glycosyl carrier lipids. The protein is Tritrans,polycis-undecaprenyl-diphosphate synthase (geranylgeranyl-diphosphate specific) of Pyrococcus abyssi (strain GE5 / Orsay).